The following is a 399-amino-acid chain: Beta-1,4-galactosyltransferase 1 (399 aa).

At 1–24 the chain is on the cytoplasmic side; sequence MRFREQFLGGSAAMPGATLQRACR. The chain crosses the membrane as a helical; Signal-anchor for type II membrane protein span at residues 25-44; the sequence is LLVAVCALHLGVTLVYYLSG. The Lumenal segment spans residues 45–399; it reads RDLSRLPQLV…QITVDIGTPR (355 aa). The tract at residues 61–113 is disordered; sequence QGGTNGAAASKQPPGEQRPRGARPPPPLGVSPKPRPGLDSSPGAASGPGLKSN. The segment covering 82 to 95 has biased composition (pro residues); that stretch reads ARPPPPLGVSPKPR. The N-linked (GlcNAc...) asparagine glycan is linked to Asn113. Residues Cys131 and Cys173 are joined by a disulfide bond. UDP-alpha-D-galactose is bound by residues 184–188, 223–225, 250–251, and Trp311; these read PFRNR, FNR, and VD. An intrachain disulfide couples Cys244 to Cys263. Asp251 contributes to the Mn(2+) binding site. 313–316 is an N-acetyl-D-glucosamine binding site; it reads GEDD. His344 serves as a coordination point for Mn(2+). 344–346 contributes to the UDP-alpha-D-galactose binding site; sequence HSR. Arg356 serves as a coordination point for N-acetyl-D-glucosamine.

It belongs to the glycosyltransferase 7 family. In terms of assembly, homodimer; and heterodimer with alpha-lactalbumin to form lactose synthase. Interacts (via N-terminal cytoplasmic domain) with UBE2Q1 (via N-terminus); the interaction is direct. Mn(2+) is required as a cofactor. In terms of processing, the soluble form derives from the membrane forms by proteolytic processing.

It localises to the golgi apparatus. The protein localises to the golgi stack membrane. The protein resides in the cell membrane. It is found in the cell surface. Its subcellular location is the cell projection. It localises to the filopodium. The protein localises to the secreted. It catalyses the reaction D-glucose + UDP-alpha-D-galactose = lactose + UDP + H(+). The enzyme catalyses an N-acetyl-beta-D-glucosaminyl derivative + UDP-alpha-D-galactose = a beta-D-galactosyl-(1-&gt;4)-N-acetyl-beta-D-glucosaminyl derivative + UDP + H(+). The catalysed reaction is N-acetyl-D-glucosamine + UDP-alpha-D-galactose = beta-D-galactosyl-(1-&gt;4)-N-acetyl-D-glucosamine + UDP + H(+). It carries out the reaction a beta-D-GlcNAc-(1-&gt;3)-beta-D-Gal-(1-&gt;4)-beta-D-Glc-(1&lt;-&gt;1)-Cer(d18:1(4E)) + UDP-alpha-D-galactose = a neolactoside nLc4Cer(d18:1(4E)) + UDP + H(+). It catalyses the reaction a beta-D-glucosylceramide + UDP-alpha-D-galactose = a beta-D-galactosyl-(1-&gt;4)-beta-D-glucosyl-(1&lt;-&gt;1)-ceramide + UDP + H(+). The enzyme catalyses a neolactoside IV(3)-beta-GlcNAc-nLc4Cer + UDP-alpha-D-galactose = a neolactoside nLc6Cer + UDP + H(+). The protein operates within protein modification; protein glycosylation. Functionally, the Golgi complex form catalyzes the production of lactose in the lactating mammary gland and could also be responsible for the synthesis of complex-type N-linked oligosaccharides in many glycoproteins as well as the carbohydrate moieties of glycolipids. In terms of biological role, the cell surface form functions as a recognition molecule during a variety of cell to cell and cell to matrix interactions, as those occurring during development and egg fertilization, by binding to specific oligosaccharide ligands on opposing cells or in the extracellular matrix. The secreted form is responsible for the synthesis of complex-type to N-linked oligosaccharides in many glycoproteins as well as the carbohydrate moieties of glycolipids. This is Beta-1,4-galactosyltransferase 1 from Mus musculus (Mouse).